Here is a 261-residue protein sequence, read N- to C-terminus: Large ribosomal subunit protein uL10m (261 aa).

The transit peptide at methionine 1–tyrosine 28 directs the protein to the mitochondrion. A disordered region spans residues glutamate 242–serine 261.

This sequence belongs to the universal ribosomal protein uL10 family. Component of the mitochondrial large ribosomal subunit (mt-LSU). Mature mammalian 55S mitochondrial ribosomes consist of a small (28S) and a large (39S) subunit. The 28S small subunit contains a 12S ribosomal RNA (12S mt-rRNA) and 30 different proteins. The 39S large subunit contains a 16S rRNA (16S mt-rRNA), a copy of mitochondrial valine transfer RNA (mt-tRNA(Val)), which plays an integral structural role, and 52 different proteins. uL10m contributes a single cysteine residue to a zinc-binding site with mL66.

It is found in the mitochondrion. The sequence is that of Large ribosomal subunit protein uL10m (MRPL10) from Homo sapiens (Human).